We begin with the raw amino-acid sequence, 469 residues long: MSAPRTLYDKIWDDHLVDSQDDGTCLLYIDRHLVHEVTSPQAFEGLRMTGRKVRAPEKTLAVVDHNVPTSPDRHLGIKNEESRIQVEALATNAAEFGVQYYSASDKRQGIVHIIGPEQGFTLPGMTIVCGDSHTSTHGAFGSLAHGIGTSEVEHVLATQTLIQKKAKNMLVRVDGQLPAGVTAKDIILAIIGEIGTAGGTGYVIEYAGEAIRALSMEGRMTICNMSIEGGARAGLIAPDETTFEYIKGKPRSPTGEALEQAIAYWKTLQTDEGAHYDRVVVLDAAALPPIVSWGSSPEDVVSVQGIVPNPDEIQDENKRTSKWRALDYMGLKPGTPMTEINIDRVFIGSCTNGRIEDLRAVAKVVEGKTVASTVDAMIVPGSGLVKEQAEAEGLDKIFKAAGFDWREPGCSMCLAMNDDRLKPGERCASTSNRNFEGRQGFKGRTHLVSPAMAAAAAIAGHFVDIREWN.

Residues cysteine 350, cysteine 410, and cysteine 413 each contribute to the [4Fe-4S] cluster site.

This sequence belongs to the aconitase/IPM isomerase family. LeuC type 1 subfamily. In terms of assembly, heterodimer of LeuC and LeuD. It depends on [4Fe-4S] cluster as a cofactor.

The catalysed reaction is (2R,3S)-3-isopropylmalate = (2S)-2-isopropylmalate. Its pathway is amino-acid biosynthesis; L-leucine biosynthesis; L-leucine from 3-methyl-2-oxobutanoate: step 2/4. In terms of biological role, catalyzes the isomerization between 2-isopropylmalate and 3-isopropylmalate, via the formation of 2-isopropylmaleate. This is 3-isopropylmalate dehydratase large subunit from Rhizobium rhizogenes (strain K84 / ATCC BAA-868) (Agrobacterium radiobacter).